The following is a 338-amino-acid chain: Cytochrome c biogenesis protein CcsA (338 aa).

8 helical membrane passes run 15–35 (FLVLFLTMLLYWGGAAFPNIP), 36–56 (GLTGLGTLGVAIANLCMATLL), 71–91 (LYESLFFLAWGVTTMHLVAEW), 97–117 (WVGVITAPVAMGITAFAALSL), 142–162 (VMMISYAALLVGSLLAIAFLI), 246–266 (IIGLGFPLLTIGIIAGAVWAN), 273–293 (WSWDPKETWALITWLVFAAYL), and 307–327 (AFLAAAGFFVVWVCYLGVNIL).

It belongs to the CcmF/CycK/Ccl1/NrfE/CcsA family. As to quaternary structure, may interact with ccs1.

It localises to the cellular thylakoid membrane. Functionally, required during biogenesis of c-type cytochromes (cytochrome c6 and cytochrome f) at the step of heme attachment. The protein is Cytochrome c biogenesis protein CcsA of Picosynechococcus sp. (strain ATCC 27264 / PCC 7002 / PR-6) (Agmenellum quadruplicatum).